A 131-amino-acid polypeptide reads, in one-letter code: Large ribosomal subunit protein bL12 (131 aa).

Belongs to the bacterial ribosomal protein bL12 family. In terms of assembly, homodimer. Part of the ribosomal stalk of the 50S ribosomal subunit. Forms a multimeric L10(L12)X complex, where L10 forms an elongated spine to which 2 to 4 L12 dimers bind in a sequential fashion. Binds GTP-bound translation factors.

Its function is as follows. Forms part of the ribosomal stalk which helps the ribosome interact with GTP-bound translation factors. Is thus essential for accurate translation. The polypeptide is Large ribosomal subunit protein bL12 (Prochlorococcus marinus (strain MIT 9215)).